Consider the following 340-residue polypeptide: L-threonine 3-dehydrogenase (340 aa).

Cys-38 provides a ligand contact to Zn(2+). Catalysis depends on charge relay system residues Thr-40 and His-43. The Zn(2+) site is built by His-63, Glu-64, Cys-93, Cys-96, Cys-99, and Cys-107. NAD(+) is bound by residues Ile-175, Asp-195, Arg-200, 262 to 264, and 286 to 287; these read LGI and IY.

It belongs to the zinc-containing alcohol dehydrogenase family. Homotetramer. Zn(2+) is required as a cofactor.

The protein localises to the cytoplasm. It catalyses the reaction L-threonine + NAD(+) = (2S)-2-amino-3-oxobutanoate + NADH + H(+). It participates in amino-acid degradation; L-threonine degradation via oxydo-reductase pathway; glycine from L-threonine: step 1/2. Its function is as follows. Catalyzes the NAD(+)-dependent oxidation of L-threonine to 2-amino-3-ketobutyrate. This Pseudoalteromonas atlantica (strain T6c / ATCC BAA-1087) protein is L-threonine 3-dehydrogenase.